We begin with the raw amino-acid sequence, 1521 residues long: Protein OPAQUE1 (1521 aa).

In terms of domain architecture, Myosin N-terminal SH3-like spans 4–53; it reads RKGLKVWVEEKGEGWVEAEVVEAKERAVVVFSSQRKKITVSPEKLLPRDT. A Myosin motor domain is found at 60 to 731; sequence GHVDDMTKLT…QIAILDMRRA (672 aa). ATP is bound by residues 155–162 and 208–216; these read GESGAGKT and NDNSSRFGK. Actin-binding regions lie at residues 493 to 527, 529 to 552, 587 to 612, and 612 to 634; these read LIEK…FRNF, SHLR…AGKV, FTSL…KLQL, and LQAL…KPNS. IQ domains follow at residues 733–755, 756–778, 781–803, 804–826, 829–851, and 852–874; these read ILDN…KEFV, KTRE…KMFA, RETA…RAHL, QACL…RYFS, REHK…ILFQ, and NYRQ…KELR. Coiled coils occupy residues 870–910 and 974–1050; these read RKEL…ERRL and SAEA…LRQK. A Dilute domain is found at 1162 to 1459; that stretch reads DHVIEAINDV…VAAMREMVNK (298 aa).

The protein belongs to the TRAFAC class myosin-kinesin ATPase superfamily. Myosin family. Plant myosin class XI subfamily. In terms of assembly, interacts (via C-terminus) with HIP (via C-terminus), but not with zeins, FL1 or intrinsic proteins of protein bodies. High expression in kernels and stems, intermediate in ears and leaves, and low in roots, silks and tassels.

The protein resides in the cytoplasm. Functionally, myosin XI motor protein required for endoplasmic reticulum motility and protein body formation. May function by binding with its tail domain to receptor proteins on membranes and exerting force with its N-terminal motor domain against actin filaments, thereby transporting its cargo along polarized actin cables. The polypeptide is Protein OPAQUE1 (Zea mays (Maize)).